The primary structure comprises 453 residues: Serine--tRNA ligase (453 aa).

249–251 (TSE) contacts L-serine. ATP-binding positions include 280-282 (RKE) and Val-296. Glu-303 contributes to the L-serine binding site. 367–370 (EMVS) is a binding site for ATP. Position 404 (Thr-404) interacts with L-serine.

The protein belongs to the class-II aminoacyl-tRNA synthetase family. Type-1 seryl-tRNA synthetase subfamily. Homodimer. The tRNA molecule binds across the dimer.

It localises to the cytoplasm. The catalysed reaction is tRNA(Ser) + L-serine + ATP = L-seryl-tRNA(Ser) + AMP + diphosphate + H(+). It carries out the reaction tRNA(Sec) + L-serine + ATP = L-seryl-tRNA(Sec) + AMP + diphosphate + H(+). The protein operates within aminoacyl-tRNA biosynthesis; selenocysteinyl-tRNA(Sec) biosynthesis; L-seryl-tRNA(Sec) from L-serine and tRNA(Sec): step 1/1. Its function is as follows. Catalyzes the attachment of serine to tRNA(Ser). Is also able to aminoacylate tRNA(Sec) with serine, to form the misacylated tRNA L-seryl-tRNA(Sec), which will be further converted into selenocysteinyl-tRNA(Sec). The chain is Serine--tRNA ligase from Archaeoglobus fulgidus (strain ATCC 49558 / DSM 4304 / JCM 9628 / NBRC 100126 / VC-16).